Reading from the N-terminus, the 134-residue chain is Replication enhancer protein (134 aa).

This sequence belongs to the geminiviridae replication enhancer protein family. Homooligomer. Interacts with the replication-associated protein (REP). Interacts with host proliferating cell nuclear antigen (PCNA). Interacts with host retinoblastoma-related protein 1 (RBR1), and may thereby deregulate the host cell cycle. Oligomerization and interaction with PCNA are necessary for optimal replication enhancement.

Increases viral DNA accumulation. Enhances infectivity and symptom expression. The sequence is that of Replication enhancer protein from Manihot esculenta (Cassava).